A 255-amino-acid polypeptide reads, in one-letter code: Geranylgeranylglyceryl phosphate synthase (255 aa).

The Mg(2+) site is built by Asp-26 and Ser-55. Sn-glycerol 1-phosphate is bound by residues 174-180 (YLEAGSG), 205-206 (GG), and 227-228 (GT).

This sequence belongs to the GGGP/HepGP synthase family. Group II subfamily. It depends on Mg(2+) as a cofactor.

The protein resides in the cytoplasm. It carries out the reaction sn-glycerol 1-phosphate + (2E,6E,10E)-geranylgeranyl diphosphate = sn-3-O-(geranylgeranyl)glycerol 1-phosphate + diphosphate. It participates in membrane lipid metabolism; glycerophospholipid metabolism. Its function is as follows. Prenyltransferase that catalyzes the transfer of the geranylgeranyl moiety of geranylgeranyl diphosphate (GGPP) to the C3 hydroxyl of sn-glycerol-1-phosphate (G1P). This reaction is the first ether-bond-formation step in the biosynthesis of archaeal membrane lipids. This Thermococcus sibiricus (strain DSM 12597 / MM 739) protein is Geranylgeranylglyceryl phosphate synthase.